Here is an 82-residue protein sequence, read N- to C-terminus: MAFGAGGGGRRPFFRRRKTCPFSGPNAPKIDYKDVKLLSRYVSERGKIVPSRITAVSAKKQRELAQAIKRARFLGFLPYVIR.

Belongs to the bacterial ribosomal protein bS18 family. As to quaternary structure, part of the 30S ribosomal subunit. Forms a tight heterodimer with protein bS6.

Its function is as follows. Binds as a heterodimer with protein bS6 to the central domain of the 16S rRNA, where it helps stabilize the platform of the 30S subunit. This chain is Small ribosomal subunit protein bS18, found in Methylobacterium nodulans (strain LMG 21967 / CNCM I-2342 / ORS 2060).